An 88-amino-acid chain; its full sequence is Low calcium response locus protein S (88 aa).

This sequence belongs to the transposase 8 family.

In Yersinia pestis, this protein is Low calcium response locus protein S (lcrS).